The following is a 347-amino-acid chain: Dihydroorotase (347 aa).

Residues His-14 and His-16 each coordinate Zn(2+). Substrate-binding positions include 16 to 18 (HLR) and Asn-42. Positions 100, 137, and 175 each coordinate Zn(2+). Lys-100 bears the N6-carboxylysine mark. A substrate-binding site is contributed by His-137. Position 220 (Leu-220) interacts with substrate. Position 248 (Asp-248) interacts with Zn(2+). Residue Asp-248 is part of the active site. Residues His-252 and Ala-264 each coordinate substrate.

This sequence belongs to the metallo-dependent hydrolases superfamily. DHOase family. Class II DHOase subfamily. Homodimer. It depends on Zn(2+) as a cofactor.

It catalyses the reaction (S)-dihydroorotate + H2O = N-carbamoyl-L-aspartate + H(+). Its pathway is pyrimidine metabolism; UMP biosynthesis via de novo pathway; (S)-dihydroorotate from bicarbonate: step 3/3. Catalyzes the reversible cyclization of carbamoyl aspartate to dihydroorotate. The sequence is that of Dihydroorotase from Stutzerimonas stutzeri (strain A1501) (Pseudomonas stutzeri).